The following is a 400-amino-acid chain: CCA-adding enzyme (400 aa).

Gly28 and Arg31 together coordinate ATP. CTP contacts are provided by Gly28 and Arg31. 2 residues coordinate Mg(2+): Asp41 and Asp43. Arg112, Asp155, Arg158, Arg161, and Arg164 together coordinate ATP. CTP-binding residues include Arg112, Asp155, Arg158, Arg161, and Arg164.

Belongs to the tRNA nucleotidyltransferase/poly(A) polymerase family. Bacterial CCA-adding enzyme type 3 subfamily. As to quaternary structure, homodimer. Requires Mg(2+) as cofactor.

The catalysed reaction is a tRNA precursor + 2 CTP + ATP = a tRNA with a 3' CCA end + 3 diphosphate. The enzyme catalyses a tRNA with a 3' CCA end + 2 CTP + ATP = a tRNA with a 3' CCACCA end + 3 diphosphate. Functionally, catalyzes the addition and repair of the essential 3'-terminal CCA sequence in tRNAs without using a nucleic acid template. Adds these three nucleotides in the order of C, C, and A to the tRNA nucleotide-73, using CTP and ATP as substrates and producing inorganic pyrophosphate. tRNA 3'-terminal CCA addition is required both for tRNA processing and repair. Also involved in tRNA surveillance by mediating tandem CCA addition to generate a CCACCA at the 3' terminus of unstable tRNAs. While stable tRNAs receive only 3'-terminal CCA, unstable tRNAs are marked with CCACCA and rapidly degraded. This chain is CCA-adding enzyme, found in Staphylococcus aureus (strain Mu3 / ATCC 700698).